The sequence spans 418 residues: Putative ion-transport protein YfeO (418 aa).

Helical transmembrane passes span 10–30 (LLLS…LIVV), 54–74 (DSPL…GLVI), 99–119 (ALPG…SLGP), 120–140 (EHPI…RLLP), 149–169 (ILAS…AALI), 186–206 (LFAP…FFHP), 223–243 (ILSG…AVWC), 258–278 (VLVL…GGPV), 300–320 (DYFL…ASGF), 322–342 (GGRI…LHEH), 343–363 (VPAV…VLVV), and 371–391 (LFMA…CIVM).

It belongs to the chloride channel (TC 2.A.49) family.

Its subcellular location is the cell membrane. This chain is Putative ion-transport protein YfeO, found in Escherichia coli (strain 55989 / EAEC).